The sequence spans 98 residues: NADH-ubiquinone oxidoreductase chain 4L (98 aa).

3 helical membrane passes run 1–21 (MTSI…GVLV), 28–48 (STLL…ALLI), and 59–79 (APLI…ALLV).

It belongs to the complex I subunit 4L family. As to quaternary structure, core subunit of respiratory chain NADH dehydrogenase (Complex I) which is composed of 45 different subunits.

The protein resides in the mitochondrion inner membrane. The catalysed reaction is a ubiquinone + NADH + 5 H(+)(in) = a ubiquinol + NAD(+) + 4 H(+)(out). In terms of biological role, core subunit of the mitochondrial membrane respiratory chain NADH dehydrogenase (Complex I) which catalyzes electron transfer from NADH through the respiratory chain, using ubiquinone as an electron acceptor. Part of the enzyme membrane arm which is embedded in the lipid bilayer and involved in proton translocation. This chain is NADH-ubiquinone oxidoreductase chain 4L (MT-ND4L), found in Dactylopsila trivirgata (Striped possum).